Reading from the N-terminus, the 237-residue chain is MSESQPGASSTTSNKCDSGFIPGDDTFTQWRNIFSILMGKMTDEGKEQFRVARDLRNEAADCKRCEDQRDYLLQYSPVIRYLSDNIRQLGGDLHSHNIYCRRCTNRKAGGFDPEYGILLCANEMKDQGHLEDTMAHEMIHAYDHLRFKVDWSNNLRHAACTEIRASSLSGECRWAREFFRRGQWKFTQQHQECVRRRAILSVRARPGCKDEAHAEKVVNEVWDSCFRDTRPFDEIYR.

H136 contributes to the a divalent metal cation binding site. The active site involves E137. H140 is a binding site for a divalent metal cation.

The protein belongs to the peptidase M76 family.

It localises to the mitochondrion inner membrane. Functionally, has a dual role in the assembly of mitochondrial ATPase. Acts as a protease that removes N-terminal residues of mitochondrial ATPase CF(0) subunit 6 at the intermembrane space side. Also involved in the correct assembly of the membrane-embedded ATPase CF(0) particle, probably mediating association of subunit 6 with the subunit 9 ring. The chain is Mitochondrial inner membrane protease atp23 (atp23) from Aspergillus clavatus (strain ATCC 1007 / CBS 513.65 / DSM 816 / NCTC 3887 / NRRL 1 / QM 1276 / 107).